The chain runs to 438 residues: Xylose isomerase (438 aa).

Active-site residues include His-103 and Asp-106. The Mg(2+) site is built by Glu-234, Glu-270, His-273, Asp-298, Asp-309, Asp-311, and Asp-341.

It belongs to the xylose isomerase family. As to quaternary structure, homotetramer. Mg(2+) is required as a cofactor.

It is found in the cytoplasm. It catalyses the reaction alpha-D-xylose = alpha-D-xylulofuranose. In Phocaeicola vulgatus (strain ATCC 8482 / DSM 1447 / JCM 5826 / CCUG 4940 / NBRC 14291 / NCTC 11154) (Bacteroides vulgatus), this protein is Xylose isomerase.